Reading from the N-terminus, the 394-residue chain is MHIRSLELRDYRSWPELKVDLEPGITVFIGRNGFGKTNIVEAIGYLAHLSSHRVSSDAPLVRAHAENARVSAVAVNQGRELAAHLLIKPHAANQASLNRTKVRTPRELLGVVKTVLFAPEDLALVKGEPAERRRYLDDIIATRQPRMAGVKADYDKVLKQRNALLKTATIALRRGYGTEEGAAALSTLDTWDGQLARLGAEVMAARFALLNELGPKIYEAYTTIAPESRPAAVNYKTTIDQGLSQFSEFDAGIIEATLLTELAAKRQREIERGSSLVGPHRDDVDLMLGDQPAKGFASHGETWSFALSLRIAEFNLLKSDDTDPILILDDVFSELDAGRRQKLVGIAQEVEQVLITAAVHDDLPENLKKVLTAQHTVTVQDTDTGRISLLDVQP.

30-37 (GRNGFGKT) is a binding site for ATP.

Belongs to the RecF family.

Its subcellular location is the cytoplasm. In terms of biological role, the RecF protein is involved in DNA metabolism; it is required for DNA replication and normal SOS inducibility. RecF binds preferentially to single-stranded, linear DNA. It also seems to bind ATP. This is DNA replication and repair protein RecF from Corynebacterium glutamicum (strain R).